A 668-amino-acid chain; its full sequence is DNA ligase (668 aa).

Residues 32 to 36 (DAEYD), 81 to 82 (SL), and Glu111 contribute to the NAD(+) site. Lys113 serves as the catalytic N6-AMP-lysine intermediate. The NAD(+) site is built by Arg134, Glu171, Lys290, and Lys314. Zn(2+) is bound by residues Cys408, Cys411, Cys426, and Cys432. The region spanning 591 to 668 (EEDLSLKGQT…DEEALIAILS (78 aa)) is the BRCT domain.

It belongs to the NAD-dependent DNA ligase family. LigA subfamily. The cofactor is Mg(2+). It depends on Mn(2+) as a cofactor.

It carries out the reaction NAD(+) + (deoxyribonucleotide)n-3'-hydroxyl + 5'-phospho-(deoxyribonucleotide)m = (deoxyribonucleotide)n+m + AMP + beta-nicotinamide D-nucleotide.. Its function is as follows. DNA ligase that catalyzes the formation of phosphodiester linkages between 5'-phosphoryl and 3'-hydroxyl groups in double-stranded DNA using NAD as a coenzyme and as the energy source for the reaction. It is essential for DNA replication and repair of damaged DNA. The polypeptide is DNA ligase (Shewanella pealeana (strain ATCC 700345 / ANG-SQ1)).